Consider the following 1039-residue polypeptide: Serine/threonine-protein kinase Tao (1039 aa).

One can recognise a Protein kinase domain in the interval 27–280 (FEDLREIGHG…SAKLLTHAYV (254 aa)). ATP contacts are provided by residues 33–41 (IGHGSFGAV) and K56. D150 functions as the Proton acceptor in the catalytic mechanism. 4 disordered regions span residues 324 to 457 (SAVG…NSAS), 485 to 508 (GGGG…LADR), 629 to 648 (HQQD…KKLH), and 677 to 707 (WKRE…KQHE). Residues 341–350 (SSKSNSITSE) are compositionally biased toward polar residues. Residues 359–376 (SAASSQSSSSNSIPAAAQ) show a composition bias toward low complexity. Residues 377–387 (NHHHIAAHHHQ) are compositionally biased toward basic residues. 2 stretches are compositionally biased toward low complexity: residues 388-397 (QAASAAVAAA) and 413-429 (PSGQ…VSRN). Residues 444-454 (HSMNNNVTPTN) are compositionally biased toward polar residues. Positions 485–500 (GGGGTGTGGSGGGSPA) are enriched in gly residues. Coiled coils occupy residues 631 to 765 (QDVE…MLLK) and 835 to 993 (KQFR…DNES). The span at 677–693 (WKRELSMDESTPKRQRD) shows a compositional bias: basic and acidic residues.

Belongs to the protein kinase superfamily. STE Ser/Thr protein kinase family. STE20 subfamily. Interacts with Schip1; the interaction enhances Tao kinase activity. Mg(2+) is required as a cofactor. In terms of processing, autophosphorylated. In terms of tissue distribution, in the posterior midgut, expressed in almost all intestinal cell types including intestinal stem cells and enterocytes (at protein level). Maternally expressed, ubiquitously distributed in the egg and early embryo and enriched in the germ plasm at the posterior pole of the early embryo including the pole cells.

It localises to the cytoplasm. The protein resides in the cytoskeleton. Its subcellular location is the spindle. The protein localises to the membrane. It is found in the perikaryon. It localises to the cell cortex. The protein resides in the cell projection. Its subcellular location is the axon. It carries out the reaction L-seryl-[protein] + ATP = O-phospho-L-seryl-[protein] + ADP + H(+). It catalyses the reaction L-threonyl-[protein] + ATP = O-phospho-L-threonyl-[protein] + ADP + H(+). Serine/threonine-protein kinase which regulates the Hippo/SWH (Sav/Wts/Hpo) signaling pathway, a signaling pathway that plays a pivotal role in organ size control and tumor suppression by restricting proliferation and promoting apoptosis. The core of this pathway is composed of a kinase cascade wherein Hippo (hpo), in complex with its regulatory protein Salvador (sav), phosphorylates and activates Warts (wts) in complex with its regulatory protein Mats, which in turn phosphorylates and inactivates the Yorkie (yki) oncoprotein. In imaginal cells, phosphorylates and activates hpo and leads to repression of yki. In the midgut, negatively regulates the proliferation of intestinal stem cells through the Hippo/SWH pathway. Independent of the hippo/SWH pathway, regulates epithelial morphogenesis in follicle cells by promoting the endocytosis of Fas2 and reducing lateral adhesion between epithelial cells which, in turn, permits shrinking of the lateral membrane and initiates morphogenesis of the squamous epithelium. Required for the development of both the mushroom body and the ellipsoid body in the brain and may act as a negative regulator of the par-1 kinase. Negatively regulates the JNK pathway which increases sensitivity to ethanol exposure. Plays a role in the control of cell shape by negatively regulating the growth of microtubule plus-ends as they contact the actin-rich cell cortex. Required for the induction of apoptosis in pole cells by promoting expression of skl which enhances activity of the apoptosis activator hid. Functionally, induces in vitro expression of large, highly dynamic, microtubule-dependent lamellopodia-like cytoplasmic expansions which constantly probe the environment. In terms of biological role, induces in vitro expression of actin-dependent filopodia-like cytoplasmic protrusions which firmly attach to the substrate. Antagonizes the activity of isoform D. The sequence is that of Serine/threonine-protein kinase Tao from Drosophila melanogaster (Fruit fly).